We begin with the raw amino-acid sequence, 347 residues long: UDP-3-O-acylglucosamine N-acyltransferase (347 aa).

The Proton acceptor role is filled by His245.

It belongs to the transferase hexapeptide repeat family. LpxD subfamily. Homotrimer.

It catalyses the reaction a UDP-3-O-[(3R)-3-hydroxyacyl]-alpha-D-glucosamine + a (3R)-hydroxyacyl-[ACP] = a UDP-2-N,3-O-bis[(3R)-3-hydroxyacyl]-alpha-D-glucosamine + holo-[ACP] + H(+). It participates in bacterial outer membrane biogenesis; LPS lipid A biosynthesis. Catalyzes the N-acylation of UDP-3-O-acylglucosamine using 3-hydroxyacyl-ACP as the acyl donor. Is involved in the biosynthesis of lipid A, a phosphorylated glycolipid that anchors the lipopolysaccharide to the outer membrane of the cell. In Chromohalobacter salexigens (strain ATCC BAA-138 / DSM 3043 / CIP 106854 / NCIMB 13768 / 1H11), this protein is UDP-3-O-acylglucosamine N-acyltransferase.